We begin with the raw amino-acid sequence, 147 residues long: Large ribosomal subunit protein uL13 (147 aa).

The protein belongs to the universal ribosomal protein uL13 family. In terms of assembly, part of the 50S ribosomal subunit.

Its function is as follows. This protein is one of the early assembly proteins of the 50S ribosomal subunit, although it is not seen to bind rRNA by itself. It is important during the early stages of 50S assembly. The chain is Large ribosomal subunit protein uL13 from Streptomyces avermitilis (strain ATCC 31267 / DSM 46492 / JCM 5070 / NBRC 14893 / NCIMB 12804 / NRRL 8165 / MA-4680).